Reading from the N-terminus, the 177-residue chain is Dual-action ribosomal maturation protein DarP (177 aa).

The protein belongs to the DarP family.

It localises to the cytoplasm. Member of a network of 50S ribosomal subunit biogenesis factors which assembles along the 30S-50S interface, preventing incorrect 23S rRNA structures from forming. Promotes peptidyl transferase center (PTC) maturation. This chain is Dual-action ribosomal maturation protein DarP, found in Histophilus somni (strain 2336) (Haemophilus somnus).